A 362-amino-acid polypeptide reads, in one-letter code: Phosphoserine aminotransferase (362 aa).

Arg-42 provides a ligand contact to L-glutamate. Residues Ala-76 to Arg-77, Trp-102, Thr-152, Asp-172, and Gln-195 each bind pyridoxal 5'-phosphate. Lys-196 carries the post-translational modification N6-(pyridoxal phosphate)lysine. Asn-237–Thr-238 contributes to the pyridoxal 5'-phosphate binding site.

The protein belongs to the class-V pyridoxal-phosphate-dependent aminotransferase family. SerC subfamily. As to quaternary structure, homodimer. Pyridoxal 5'-phosphate serves as cofactor.

Its subcellular location is the cytoplasm. The enzyme catalyses O-phospho-L-serine + 2-oxoglutarate = 3-phosphooxypyruvate + L-glutamate. It catalyses the reaction 4-(phosphooxy)-L-threonine + 2-oxoglutarate = (R)-3-hydroxy-2-oxo-4-phosphooxybutanoate + L-glutamate. Its pathway is amino-acid biosynthesis; L-serine biosynthesis; L-serine from 3-phospho-D-glycerate: step 2/3. The protein operates within cofactor biosynthesis; pyridoxine 5'-phosphate biosynthesis; pyridoxine 5'-phosphate from D-erythrose 4-phosphate: step 3/5. Its function is as follows. Catalyzes the reversible conversion of 3-phosphohydroxypyruvate to phosphoserine and of 3-hydroxy-2-oxo-4-phosphonooxybutanoate to phosphohydroxythreonine. The sequence is that of Phosphoserine aminotransferase from Haemophilus influenzae (strain ATCC 51907 / DSM 11121 / KW20 / Rd).